The sequence spans 281 residues: Pantothenate synthetase (281 aa).

30 to 37 (MGNLHQGH) contributes to the ATP binding site. The Proton donor role is filled by H37. Q61 contacts (R)-pantoate. Q61 contributes to the beta-alanine binding site. Position 149-152 (149-152 (GNKD)) interacts with ATP. Residue Q155 coordinates (R)-pantoate. ATP contacts are provided by residues I178 and 186–189 (MSSR).

It belongs to the pantothenate synthetase family. In terms of assembly, homodimer.

It is found in the cytoplasm. It carries out the reaction (R)-pantoate + beta-alanine + ATP = (R)-pantothenate + AMP + diphosphate + H(+). Its pathway is cofactor biosynthesis; (R)-pantothenate biosynthesis; (R)-pantothenate from (R)-pantoate and beta-alanine: step 1/1. Functionally, catalyzes the condensation of pantoate with beta-alanine in an ATP-dependent reaction via a pantoyl-adenylate intermediate. The sequence is that of Pantothenate synthetase from Shewanella sp. (strain MR-7).